The following is a 349-amino-acid chain: Interferon-stimulated 20 kDa exonuclease-like 2 (349 aa).

2 disordered regions span residues Met1–Pro100 and Ala126–Gly166. Basic and acidic residues predominate over residues Pro14–Ala23. Basic residues predominate over residues Lys24 to Pro47. Over residues Leu54–Arg66 the composition is skewed to basic and acidic residues. A compositionally biased stretch (low complexity) spans Thr70 to Ser87. Residues Ile130 to Ser142 show a composition bias toward basic residues. The 157-residue stretch at Met175–Tyr331 folds into the Exonuclease domain.

It localises to the nucleus. Its subcellular location is the nucleolus. Its function is as follows. 3'-&gt; 5'-exoribonuclease involved in ribosome biogenesis in the processing of the 12S pre-rRNA. Displays a strong specificity for a 3'-end containing a free hydroxyl group. This chain is Interferon-stimulated 20 kDa exonuclease-like 2 (ISG20L2), found in Bos taurus (Bovine).